The primary structure comprises 427 residues: Trigger factor (427 aa).

Residues 163–248 enclose the PPIase FKBP-type domain; the sequence is GDTVVIDFVG…IHEVKAKEVP (86 aa).

Belongs to the FKBP-type PPIase family. Tig subfamily.

The protein localises to the cytoplasm. It carries out the reaction [protein]-peptidylproline (omega=180) = [protein]-peptidylproline (omega=0). Its function is as follows. Involved in protein export. Acts as a chaperone by maintaining the newly synthesized protein in an open conformation. Functions as a peptidyl-prolyl cis-trans isomerase. The sequence is that of Trigger factor from Streptococcus mutans serotype c (strain ATCC 700610 / UA159).